The chain runs to 256 residues: Small ribosomal subunit protein uS2 (256 aa).

It belongs to the universal ribosomal protein uS2 family.

The protein is Small ribosomal subunit protein uS2 of Streptococcus agalactiae serotype III (strain NEM316).